A 277-amino-acid polypeptide reads, in one-letter code: MLHHYYSGGAGHHQDVAAAGSPGDMASSTFSLFFPMSNGQCWPPSTVEESAAYDDHSTVTTSPSSPSSSSTGSVDCTLSLGTPSSRRAEPVAAAAPAANHGAPVPAHYPSLSAATVSWDATAESYYCGQQGRPATGAAKCAAGAGHDALLDRRCANCGTASTPLWRNGPRGPKSLCNACGIRYKKEERRAAATTTTADGAAGCGFITAQRGRGSTAAKAAPAVTTCGEETSPYVVGGGGGEVANAAYLAWRLNVVPPAATATAFSVWPERASLYHYN.

The disordered stretch occupies residues 52 to 94; sequence AYDDHSTVTTSPSSPSSSSTGSVDCTLSLGTPSSRRAEPVAAA. Residues 58-74 are compositionally biased toward low complexity; that stretch reads TVTTSPSSPSSSSTGSV. The GATA-type zinc finger occupies 154–179; sequence CANCGTASTPLWRNGPRGPKSLCNAC.

The protein belongs to the type IV zinc-finger family. Class B subfamily.

Probable transcription factor that regulates organogenesis during transition from the vegetative to the reproductive phase. Regulates the expression of CYP78A11/PLA1, HD3A and MADS1 during reproductive development in rice. May act upstream of CYP78A11/PLA1 during panicle development. Acts independently of the photoperiodic and gibberellin signaling pathways. The sequence is that of GATA transcription factor 15 from Oryza sativa subsp. indica (Rice).